A 429-amino-acid chain; its full sequence is Hemoglobinase (429 aa).

The N-terminal stretch at 1-19 (MMLFSLFLISILHILLVKC) is a signal peptide. Residues 20 to 31 (QLDTNYEVSDET) constitute a propeptide that is removed on maturation. His-151 is a catalytic residue. The tract at residues 288 to 309 (FQGSRDKSSSENDEPPMKPRHS) is disordered. A propeptide spanning residues 292-429 (RDKSSSENDE…INEAIIKICG (138 aa)) is cleaved from the precursor.

The protein belongs to the peptidase C13 family.

It catalyses the reaction Hydrolysis of proteins and small molecule substrates at -Asn-|-Xaa- bonds.. Its function is as follows. This protease is used by the parasite for degradation of the host globin. In Schistosoma mansoni (Blood fluke), this protein is Hemoglobinase.